A 383-amino-acid polypeptide reads, in one-letter code: Arginine biosynthesis bifunctional protein ArgJ (383 aa).

The substrate site is built by Thr146, Lys168, Thr179, Glu259, Asn378, and Thr383. Thr179 serves as the catalytic Nucleophile.

This sequence belongs to the ArgJ family. In terms of assembly, heterotetramer of two alpha and two beta chains.

The protein resides in the cytoplasm. It carries out the reaction N(2)-acetyl-L-ornithine + L-glutamate = N-acetyl-L-glutamate + L-ornithine. The catalysed reaction is L-glutamate + acetyl-CoA = N-acetyl-L-glutamate + CoA + H(+). It functions in the pathway amino-acid biosynthesis; L-arginine biosynthesis; L-ornithine and N-acetyl-L-glutamate from L-glutamate and N(2)-acetyl-L-ornithine (cyclic): step 1/1. It participates in amino-acid biosynthesis; L-arginine biosynthesis; N(2)-acetyl-L-ornithine from L-glutamate: step 1/4. Functionally, catalyzes two activities which are involved in the cyclic version of arginine biosynthesis: the synthesis of N-acetylglutamate from glutamate and acetyl-CoA as the acetyl donor, and of ornithine by transacetylation between N(2)-acetylornithine and glutamate. This chain is Arginine biosynthesis bifunctional protein ArgJ, found in Thermobifida fusca (strain YX).